Consider the following 94-residue polypeptide: Pyrimidine/purine nucleoside phosphorylase 2 (94 aa).

It belongs to the nucleoside phosphorylase PpnP family.

It carries out the reaction a purine D-ribonucleoside + phosphate = a purine nucleobase + alpha-D-ribose 1-phosphate. It catalyses the reaction adenosine + phosphate = alpha-D-ribose 1-phosphate + adenine. The enzyme catalyses cytidine + phosphate = cytosine + alpha-D-ribose 1-phosphate. The catalysed reaction is guanosine + phosphate = alpha-D-ribose 1-phosphate + guanine. It carries out the reaction inosine + phosphate = alpha-D-ribose 1-phosphate + hypoxanthine. It catalyses the reaction thymidine + phosphate = 2-deoxy-alpha-D-ribose 1-phosphate + thymine. The enzyme catalyses uridine + phosphate = alpha-D-ribose 1-phosphate + uracil. The catalysed reaction is xanthosine + phosphate = alpha-D-ribose 1-phosphate + xanthine. Its function is as follows. Catalyzes the phosphorolysis of diverse nucleosides, yielding D-ribose 1-phosphate and the respective free bases. Can use uridine, adenosine, guanosine, cytidine, thymidine, inosine and xanthosine as substrates. Also catalyzes the reverse reactions. The sequence is that of Pyrimidine/purine nucleoside phosphorylase 2 from Psychrobacter cryohalolentis (strain ATCC BAA-1226 / DSM 17306 / VKM B-2378 / K5).